We begin with the raw amino-acid sequence, 397 residues long: Phosphoglycerate kinase (397 aa).

Substrate contacts are provided by residues 21-23, Arg-37, 60-63, Arg-119, and Arg-152; these read DFN and HLGR. ATP is bound by residues Lys-203, Gly-294, Glu-325, and 354–357; that span reads GGDS.

This sequence belongs to the phosphoglycerate kinase family. In terms of assembly, monomer.

It localises to the cytoplasm. The enzyme catalyses (2R)-3-phosphoglycerate + ATP = (2R)-3-phospho-glyceroyl phosphate + ADP. Its pathway is carbohydrate degradation; glycolysis; pyruvate from D-glyceraldehyde 3-phosphate: step 2/5. In Pelodictyon phaeoclathratiforme (strain DSM 5477 / BU-1), this protein is Phosphoglycerate kinase.